The following is a 263-amino-acid chain: Pro-opiomelanocortin (263 aa).

A signal peptide spans 1–25 (MLHPVWGCVVAVMGVLWFYSSGVQS). Residue Q26 is modified to Pyrrolidone carboxylic acid. Intrachain disulfides connect C27/C49 and C33/C45. A disordered region spans residues 114–142 (SQPRDEVERESEEEEGLQQHRRDDKRSYS). The segment covering 130 to 142 (LQQHRRDDKRSYS) has biased composition (basic and acidic residues). V152 bears the Valine amide mark.

This sequence belongs to the POMC family. Post-translationally, specific enzymatic cleavages at paired basic residues yield the different active peptides.

It localises to the secreted. Functionally, stimulates the adrenal glands to release cortisol. Anorexigenic peptide. Increases the pigmentation of skin by increasing melanin production in melanocytes. In terms of biological role, increases the pigmentation of skin by increasing melanin production in melanocytes. Its function is as follows. Endogenous orexigenic opiate. Functionally, endogenous opiate. The polypeptide is Pro-opiomelanocortin (pomc) (Acipenser transmontanus (White sturgeon)).